Reading from the N-terminus, the 37-residue chain is Large ribosomal subunit protein bL36 (37 aa).

The protein belongs to the bacterial ribosomal protein bL36 family.

The polypeptide is Large ribosomal subunit protein bL36 (Thermomicrobium roseum (strain ATCC 27502 / DSM 5159 / P-2)).